The sequence spans 266 residues: Glucosamine-6-phosphate deaminase (266 aa).

Asp72 serves as the catalytic Proton acceptor; for enolization step. Asp141 functions as the For ring-opening step in the catalytic mechanism. His143 acts as the Proton acceptor; for ring-opening step in catalysis. Glu148 (for ring-opening step) is an active-site residue.

Belongs to the glucosamine/galactosamine-6-phosphate isomerase family. NagB subfamily. Homohexamer.

It catalyses the reaction alpha-D-glucosamine 6-phosphate + H2O = beta-D-fructose 6-phosphate + NH4(+). It functions in the pathway amino-sugar metabolism; N-acetylneuraminate degradation; D-fructose 6-phosphate from N-acetylneuraminate: step 5/5. Its activity is regulated as follows. Allosterically activated by N-acetylglucosamine 6-phosphate (GlcNAc6P). Its function is as follows. Catalyzes the reversible isomerization-deamination of glucosamine 6-phosphate (GlcN6P) to form fructose 6-phosphate (Fru6P) and ammonium ion. This Yersinia enterocolitica serotype O:8 / biotype 1B (strain NCTC 13174 / 8081) protein is Glucosamine-6-phosphate deaminase.